Consider the following 320-residue polypeptide: Malate dehydrogenase (320 aa).

Residues 10 to 15 and Asp-34 each bind NAD(+); that span reads GSGMIG. Substrate is bound by residues Arg-83 and Arg-89. NAD(+)-binding positions include Asn-96 and 119–121; that span reads ITN. Positions 121 and 152 each coordinate substrate. His-176 acts as the Proton acceptor in catalysis.

It belongs to the LDH/MDH superfamily. MDH type 3 family.

It catalyses the reaction (S)-malate + NAD(+) = oxaloacetate + NADH + H(+). Functionally, catalyzes the reversible oxidation of malate to oxaloacetate. In Rhizobium etli (strain CIAT 652), this protein is Malate dehydrogenase.